The following is a 243-amino-acid chain: Triosephosphate isomerase (243 aa).

9–11 (NWK) is a binding site for substrate. The active-site Electrophile is the H96. E165 (proton acceptor) is an active-site residue. Substrate-binding positions include G171, S204, and 225 to 226 (GG).

The protein belongs to the triosephosphate isomerase family. Homodimer.

Its subcellular location is the cytoplasm. It catalyses the reaction D-glyceraldehyde 3-phosphate = dihydroxyacetone phosphate. It functions in the pathway carbohydrate biosynthesis; gluconeogenesis. It participates in carbohydrate degradation; glycolysis; D-glyceraldehyde 3-phosphate from glycerone phosphate: step 1/1. Its function is as follows. Involved in the gluconeogenesis. Catalyzes stereospecifically the conversion of dihydroxyacetone phosphate (DHAP) to D-glyceraldehyde-3-phosphate (G3P). This chain is Triosephosphate isomerase, found in Prochlorococcus marinus (strain SARG / CCMP1375 / SS120).